Here is a 217-residue protein sequence, read N- to C-terminus: Large ribosomal subunit protein bL25 (217 aa).

Belongs to the bacterial ribosomal protein bL25 family. CTC subfamily. Part of the 50S ribosomal subunit; part of the 5S rRNA/L5/L18/L25 subcomplex. Contacts the 5S rRNA. Binds to the 5S rRNA independently of L5 and L18.

This is one of the proteins that binds to the 5S RNA in the ribosome where it forms part of the central protuberance. This is Large ribosomal subunit protein bL25 from Methylobacterium sp. (strain 4-46).